Reading from the N-terminus, the 1037-residue chain is Tyrosine-protein kinase-like otk (1037 aa).

Residues 1–23 (MDMDVMMISMCILASTFMAPGWA) form the signal peptide. Ig-like C2-type domains are found at residues 24 to 109 (STSG…REAS), 110 to 199 (PPAK…RVMS), 251 to 365 (PEDL…APLN), 368 to 464 (PGLL…VSIN), and 469 to 559 (PKFS…VQLV). At 24–582 (STSGFLRVPQ…GGDGFLVTRA (559 aa)) the chain is on the extracellular side. 5 disulfide bridges follow: Cys-47-Cys-96, Cys-138-Cys-188, Cys-276-Cys-354, Cys-399-Cys-448, and Cys-491-Cys-543. 6 N-linked (GlcNAc...) asparagine glycosylation sites follow: Asn-336, Asn-418, Asn-430, Asn-445, Asn-513, and Asn-525. The chain crosses the membrane as a helical span at residues 583–603 (VLITMTVALAYIVLVVGLMLW). At 604-1037 (CRYRRQARKA…SKAMQSVAEK (434 aa)) the chain is on the cytoplasmic side. 2 disordered regions span residues 623–683 (AGGD…KSVY) and 720–777 (SAQS…KEEE). A compositionally biased stretch (polar residues) spans 658-676 (KSNGDAQKSDDTACSQQSR). A Phosphoserine modification is found at Ser-681. In terms of domain architecture, Protein kinase; inactive spans 693-1031 (LSELLQIGRG…QLGSALSKAM (339 aa)). Basic and acidic residues predominate over residues 723 to 734 (SDKDADTEKQHS). The span at 739–749 (GSGGSGSGSGS) shows a compositional bias: gly residues. The span at 768–777 (DDIEEIKEEE) shows a compositional bias: acidic residues.

This sequence belongs to the protein kinase superfamily. Tyr protein kinase family. Insulin receptor subfamily. As to quaternary structure, interacts with plexA; component of a receptor complex that mediates the repulsive signaling in response to Semaphorin ligands.

It localises to the cell membrane. In terms of biological role, acts as a calcium-dependent, homophilic cell adhesion molecule that regulates neural recognition during the development of the nervous system. Component of the repulsive Plexin signaling response to regulate motor axon guidance at the embryonic stage. Also component of a receptor complex that is required in the adult visual system to innervate the lamina layer; specific targeting of R1-R6 axons. The sequence is that of Tyrosine-protein kinase-like otk from Drosophila pseudoobscura pseudoobscura (Fruit fly).